The sequence spans 325 residues: MATH domain and coiled-coil domain-containing protein At3g58430 (325 aa).

Positions 6-131 (HKKFCWIIKN…KGDFKIIAEV (126 aa)) constitute an MATH domain. Residues 258–306 (FKVDWLEKKLDQVKDKKEREQSGLARLHELEEYLLKLKQKCSNLDLLVE) are a coiled coil.

In Arabidopsis thaliana (Mouse-ear cress), this protein is MATH domain and coiled-coil domain-containing protein At3g58430.